A 346-amino-acid polypeptide reads, in one-letter code: Large ribosomal subunit protein uL3 (346 aa).

Residues 324 to 346 (KPPKKKPPVERPQITYVSRESKQ) are disordered.

This sequence belongs to the universal ribosomal protein uL3 family. Part of the 50S ribosomal subunit. Forms a cluster with proteins L14 and L24e.

Functionally, one of the primary rRNA binding proteins, it binds directly near the 3'-end of the 23S rRNA, where it nucleates assembly of the 50S subunit. The chain is Large ribosomal subunit protein uL3 from Thermococcus gammatolerans (strain DSM 15229 / JCM 11827 / EJ3).